The chain runs to 93 residues: Cell division topological specificity factor (93 aa).

This sequence belongs to the MinE family.

Its function is as follows. Prevents the cell division inhibition by proteins MinC and MinD at internal division sites while permitting inhibition at polar sites. This ensures cell division at the proper site by restricting the formation of a division septum at the midpoint of the long axis of the cell. This Halorhodospira halophila (strain DSM 244 / SL1) (Ectothiorhodospira halophila (strain DSM 244 / SL1)) protein is Cell division topological specificity factor.